The sequence spans 167 residues: Putative lipoprotein YteS (167 aa).

Positions 1–20 (MTKRIRTALCVIVSVLFLAS) are cleaved as a signal peptide. Cysteine 21 carries the N-palmitoyl cysteine lipid modification. Residue cysteine 21 is the site of S-diacylglycerol cysteine attachment.

Its subcellular location is the cell membrane. In terms of biological role, may play a role in the degradation of type I rhamnogalacturonan derived from plant cell walls. The sequence is that of Putative lipoprotein YteS (yteS) from Bacillus subtilis (strain 168).